The following is a 103-amino-acid chain: V-type ATP synthase subunit F (103 aa).

It belongs to the V-ATPase F subunit family.

In terms of biological role, produces ATP from ADP in the presence of a proton gradient across the membrane. This chain is V-type ATP synthase subunit F, found in Clostridium botulinum (strain Alaska E43 / Type E3).